A 427-amino-acid chain; its full sequence is Enolase (427 aa).

Q163 provides a ligand contact to (2R)-2-phosphoglycerate. E205 (proton donor) is an active-site residue. Positions 242, 285, and 312 each coordinate Mg(2+). (2R)-2-phosphoglycerate-binding residues include K337, R366, S367, and K388. K337 functions as the Proton acceptor in the catalytic mechanism.

This sequence belongs to the enolase family. Mg(2+) serves as cofactor.

The protein resides in the cytoplasm. It localises to the secreted. Its subcellular location is the cell surface. It carries out the reaction (2R)-2-phosphoglycerate = phosphoenolpyruvate + H2O. The protein operates within carbohydrate degradation; glycolysis; pyruvate from D-glyceraldehyde 3-phosphate: step 4/5. Catalyzes the reversible conversion of 2-phosphoglycerate (2-PG) into phosphoenolpyruvate (PEP). It is essential for the degradation of carbohydrates via glycolysis. The protein is Enolase of Xanthobacter autotrophicus (strain ATCC BAA-1158 / Py2).